We begin with the raw amino-acid sequence, 249 residues long: Large ribosomal subunit protein uL4 (249 aa).

This sequence belongs to the universal ribosomal protein uL4 family. In terms of assembly, part of the 50S ribosomal subunit.

In terms of biological role, one of the primary rRNA binding proteins, this protein initially binds near the 5'-end of the 23S rRNA. It is important during the early stages of 50S assembly. It makes multiple contacts with different domains of the 23S rRNA in the assembled 50S subunit and ribosome. Its function is as follows. Forms part of the polypeptide exit tunnel. In Methanospirillum hungatei JF-1 (strain ATCC 27890 / DSM 864 / NBRC 100397 / JF-1), this protein is Large ribosomal subunit protein uL4.